We begin with the raw amino-acid sequence, 148 residues long: Protein Turandot Z (148 aa).

The N-terminal stretch at 1–23 (MYFAIRLSFVLAVLFCLTGNGSA) is a signal peptide.

It belongs to the Turandot family.

The protein resides in the secreted. Functionally, a humoral factor that may play a role in stress tolerance. In Drosophila sechellia (Fruit fly), this protein is Protein Turandot Z.